A 3119-amino-acid polypeptide reads, in one-letter code: Huntingtin (3119 aa).

The tract at residues 1–65 is disordered; sequence MATLEKLMKA…LPGPAEEPLH (65 aa). K9 carries the post-translational modification N6-acetyllysine. Residues 24-60 show a composition bias toward pro residues; sequence QPPPQAPPPPPPPPPQPPQPPPQGQPPPPPPPLPGPA. 2 positions are modified to N6-acetyllysine: K155 and K213. 2 HEAT repeats span residues 183-220 and 225-262; these read PYLV…SFGN and NEIK…HSRR. Position 322 is an N6-acetyllysine (K322). S396, S398, and S411 each carry phosphoserine. K421 carries the post-translational modification N6-acetyllysine. The interval 470–481 is interaction with ZDHHC17; that stretch reads GHDIITEQPRSQ. The segment at 495-558 is disordered; sequence DLTSAATDGD…DSAVTPSDSS (64 aa). The segment covering 529–558 has biased composition (polar residues); the sequence is DGTQASSPISDSSQTTTEGPDSAVTPSDSS. The N-myristoyl glycine moiety is linked to residue G530. Phosphoserine occurs at positions 620 and 623. HEAT repeat units follow at residues 782–819 and 882–920; these read FSLV…SLCS and KLQE…KLFY. Positions 1146–1204 are disordered; it reads KAALPSLTNPPSLSPIRRKGKEKEPGEQASTPMSPKKVGEASAASRQSDTSGPVTASKS. Low complexity predominate over residues 1149–1160; that stretch reads LPSLTNPPSLSP. Phosphoserine; by CDK5 is present on residues S1159 and S1179. A compositionally biased stretch (polar residues) spans 1189–1204; sequence ASRQSDTSGPVTASKS. An HEAT 5 repeat occupies 1404 to 1441; it reads LFEPLVIKALKQYTTTTSVQLQKQVLDLLAQLVQLRVN. A Phosphoserine modification is found at S1853. The short motif at 2372 to 2381 is the Nuclear export signal element; sequence IVISLARLPL. The interval 2610–2637 is disordered; that stretch reads EEEWDEEEEEESDVPAPTSPPVSPVNSR. A compositionally biased stretch (acidic residues) spans 2611 to 2622; that stretch reads EEWDEEEEEESD.

The protein belongs to the huntingtin family. As to quaternary structure, interacts with PFN1. Interacts through its N-terminus with PRPF40A. Interacts with PQBP1. Interacts with SETD2. Interacts with SH3GLB1. Interacts with SYVN. Interacts with TPR; the interaction is inhibited by forms of Huntingtin with expanded polyglutamine stretch. Interacts with ZDHHC13 (via ANK repeats). Interacts with ZDHHC17 (via ANK repeats). Interacts with F8A1/F8A2/F8A3. Found in a complex with F8A1/F8A2/F8A3, HTT and RAB5A; mediates the recruitment of HTT by RAB5A. Post-translationally, phosphorylation at Ser-1159 and Ser-1179 by CDK5 in response to DNA damage in nuclei of neurons protects neurons against polyglutamine expansion as well as DNA damage mediated toxicity. In terms of processing, cleaved by caspases downstream of the polyglutamine stretch. Myristoylated at Gly-530, following proteolytic cleavage at Asp-529. The highest level is seen throughout the brain, but it is also found in the stomach, heart, testis, adipose tissue, muscle, spleen, liver, and kidney.

The protein localises to the cytoplasm. It localises to the nucleus. The protein resides in the cytoplasmic vesicle. It is found in the autophagosome. May play a role in microtubule-mediated transport or vesicle function. Functionally, promotes the formation of autophagic vesicles. This chain is Huntingtin (Htt), found in Mus musculus (Mouse).